A 2429-amino-acid polypeptide reads, in one-letter code: Reducing polyketide synthase ppsB (2429 aa).

Residues 4–442 (DERVAIIGTG…GTNAHAILES (439 aa)) enclose the Ketosynthase family 3 (KS3) domain. Active-site for beta-ketoacyl synthase activity residues include Cys177, His317, and His362. The tract at residues 558–873 (VFTGQGAQWP…PYIGLAHRGE (316 aa)) is malonyl-CoA:ACP transacylase (MAT) domain. The active-site For acyl/malonyl transferase activity is Ser652. Residues 945-1075 (HPLLGVLSSE…GRVILALGEA (131 aa)) are N-terminal hotdog fold. The product template (PT) domain stretch occupies residues 945-1227 (HPLLGVLSSE…QLEGIHLTLS (283 aa)). In terms of domain architecture, PKS/mFAS DH spans 945 to 1233 (HPLLGVLSSE…LTLSKPKNSS (289 aa)). Residues 1090–1233 (SYPMNVDKFY…LTLSKPKNSS (144 aa)) are C-terminal hotdog fold. The tract at residues 1409–2158 (LEVGAGTGSA…ISDLYDQLTS (750 aa)) is methyltransferase (CMeT) domain. The 76-residue stretch at 2350 to 2425 (EIILQLFKEK…SMVDEVVKRR (76 aa)) folds into the Carrier domain. Ser2385 carries the O-(pantetheine 4'-phosphoryl)serine modification.

It functions in the pathway secondary metabolite biosynthesis. Functionally, reducing polyketide synthase; part of the gene cluster that mediates the biosynthesis of 2,4'-dihydroxy-3'-methoxypropiophenone. The first step of the pathway is the conversion of acetate into acetyl-CoA by the acyl-CoA ligase ppsA. Acetyl-CoA is then used as a starter unit by the polyketide synthase ppsB and condensed with 4 malonyl-CoA unit to produce the pentaketide backbone. During polyketide extension, the polykedite chain is probably reduced and dehydrated by the KR and PT domains, respectively. O-methylation seems to be catalyzed by an unknown methyltransferase rather than by the CMeT domain of ppsB. Two hydroxylations and one further decarboxylation step catalyzed by yet unknown enzymes are then required to yield 4'-hydroxy-3'-methoxypropiophenone. PpsC functions as a carrier protein to transport 4'-hydroxy-3'-methoxypropiophenone to a specific cell compartment in which 4'-hydroxy-3'-methoxypropiophenone is hydroxylated to 2,4'-dihydroxy-3'-methoxypropiophenone by a still to be identified enzyme. The polypeptide is Reducing polyketide synthase ppsB (Aspergillus oryzae (strain ATCC 42149 / RIB 40) (Yellow koji mold)).